Here is a 587-residue protein sequence, read N- to C-terminus: ATF/CREB activator 2 (587 aa).

Disordered regions lie at residues 1–62, 123–144, 169–195, and 381–423; these read MFTG…SRSL, LRQQ…EEES, NLSQ…SNIA, and TGGE…IPGT. The segment covering 16–29 has biased composition (basic and acidic residues); it reads KQKDNNKRGIDDTS. Low complexity-rich tracts occupy residues 39–57 and 123–134; these read SVSD…NNSA and LRQQQQQDQRQQ. A phosphoserine mark is found at S171 and S179. Residues 385-395 show a composition bias toward basic and acidic residues; the sequence is NRGKSALRESH. Residues 396 to 418 show a composition bias toward polar residues; that stretch reads SNPSFTPKSQGSHLNLAANTQGN. A Phosphoserine modification is found at S399. The region spanning 425-488 is the bZIP domain; sequence AWKRARLLER…SKFKKFSKIH (64 aa). Residues 427–447 are basic motif; that stretch reads KRARLLERNRIAASKCRQRKK. The leucine-zipper stretch occupies residues 453 to 467; that stretch reads LQKEFNEIKDENRIL. The tract at residues 552-587 is disordered; it reads SQRFGSDTDDDDIDLKPVEGGKDPDNQSLPNSEKIK. Residue S557 is modified to Phosphoserine. T559 bears the Phosphothreonine mark. Basic and acidic residues predominate over residues 565–576; the sequence is DLKPVEGGKDPD. Over residues 577–587 the composition is skewed to polar residues; sequence NQSLPNSEKIK.

It belongs to the bZIP family.

It localises to the nucleus. Functionally, transcriptional activator of promoters containing ATF/CREB sites. Can independently stimulate transcription through ATF/CREB sites. Important for a variety of biological functions including growth on non-optimal carbon sources. This is ATF/CREB activator 2 (CST6) from Saccharomyces cerevisiae (strain ATCC 204508 / S288c) (Baker's yeast).